Reading from the N-terminus, the 196-residue chain is Lipoprotein signal peptidase (196 aa).

The next 3 helical transmembrane spans lie at 43–63 (LMLKVTAFLNMVYTWNYGISF), 75–95 (AVFILTNSIIVCYLYYLMVCS), and 100–120 (GFAGYSFVIGGAVGNLIDRLF). Residues D126 and D144 contribute to the active site. Residues 135–155 (YSFPVFNLADCFITIGVIILI) form a helical membrane-spanning segment.

The protein belongs to the peptidase A8 family.

It localises to the cell inner membrane. It catalyses the reaction Release of signal peptides from bacterial membrane prolipoproteins. Hydrolyzes -Xaa-Yaa-Zaa-|-(S,diacylglyceryl)Cys-, in which Xaa is hydrophobic (preferably Leu), and Yaa (Ala or Ser) and Zaa (Gly or Ala) have small, neutral side chains.. Its pathway is protein modification; lipoprotein biosynthesis (signal peptide cleavage). Functionally, this protein specifically catalyzes the removal of signal peptides from prolipoproteins. In Rickettsia canadensis (strain McKiel), this protein is Lipoprotein signal peptidase.